A 359-amino-acid chain; its full sequence is CMP-N-acetylneuraminate-poly-alpha-2,8-sialyltransferase (359 aa).

Residues 1–7 (MRSIRKR) lie on the Cytoplasmic side of the membrane. Residues 8-20 (WTICTISLLLIFY) form a helical; Signal-anchor for type II membrane protein membrane-spanning segment. The Lumenal portion of the chain corresponds to 21 to 359 (KTKEIARTEE…KLTTGKCVKQ (339 aa)). Asn-50, Asn-74, and Asn-119 each carry an N-linked (GlcNAc...) asparagine glycan. Cystine bridges form between Cys-142/Cys-292 and Cys-156/Cys-356. Asn-147 and Asn-170 together coordinate CMP-N-acetyl-beta-neuraminate. N-linked (GlcNAc...) asparagine glycans are attached at residues Asn-204 and Asn-219. CMP-N-acetyl-beta-neuraminate is bound by residues Ser-279, Thr-280, Gly-281, and Trp-301. His-331 functions as the Proton donor/acceptor in the catalytic mechanism.

The protein belongs to the glycosyltransferase 29 family. Post-translationally, autopolysialylated.

It is found in the golgi apparatus membrane. Its subcellular location is the secreted. The catalysed reaction is [N-acetyl-alpha-D-neuraminosyl-(2-&gt;8)](n) + CMP-N-acetyl-beta-neuraminate = [N-acetyl-alpha-D-neuraminosyl-(2-&gt;8)](n+1) + CMP + H(+). Catalyzes the transfer of a sialic acid from a CMP-linked sialic acid donor onto a terminal alpha-2,3-, alpha-2,6-, or alpha-2,8-linked sialic acid of an N-linked glycan protein acceptor through alpha-2,8-linkages. Therefore, participates in polysialic acid synthesis on various sialylated N-acetyllactosaminyl oligosaccharides, including NCAM1 N-glycans, FETUB N-glycans and AHSG. It is noteworthy that alpha-2,3-linked sialic acid is apparently a better acceptor than alpha-2,6-linked sialic acid. The chain is CMP-N-acetylneuraminate-poly-alpha-2,8-sialyltransferase (ST8SIA4) from Pan troglodytes (Chimpanzee).